A 227-amino-acid polypeptide reads, in one-letter code: Ribosomal RNA large subunit methyltransferase E (227 aa).

Residues Gly-78, Trp-80, Asp-103, Asp-119, and Asp-143 each contribute to the S-adenosyl-L-methionine site. The active-site Proton acceptor is Lys-183.

It belongs to the class I-like SAM-binding methyltransferase superfamily. RNA methyltransferase RlmE family.

Its subcellular location is the cytoplasm. It carries out the reaction uridine(2552) in 23S rRNA + S-adenosyl-L-methionine = 2'-O-methyluridine(2552) in 23S rRNA + S-adenosyl-L-homocysteine + H(+). Specifically methylates the uridine in position 2552 of 23S rRNA at the 2'-O position of the ribose in the fully assembled 50S ribosomal subunit. The protein is Ribosomal RNA large subunit methyltransferase E of Rickettsia rickettsii (strain Iowa).